We begin with the raw amino-acid sequence, 121 residues long: Small ribosomal subunit protein uS13 (121 aa).

The interval 90–121 (RHRRGLPTRGQNTKNNARTRKGPTKTVAGKKK) is disordered. Residues 106–121 (ARTRKGPTKTVAGKKK) are compositionally biased toward basic residues.

The protein belongs to the universal ribosomal protein uS13 family. In terms of assembly, part of the 30S ribosomal subunit. Forms a loose heterodimer with protein S19. Forms two bridges to the 50S subunit in the 70S ribosome.

Its function is as follows. Located at the top of the head of the 30S subunit, it contacts several helices of the 16S rRNA. In the 70S ribosome it contacts the 23S rRNA (bridge B1a) and protein L5 of the 50S subunit (bridge B1b), connecting the 2 subunits; these bridges are implicated in subunit movement. Contacts the tRNAs in the A and P-sites. This Enterococcus faecalis (strain ATCC 700802 / V583) protein is Small ribosomal subunit protein uS13.